The sequence spans 274 residues: Kit ligand (274 aa).

An N-terminal signal peptide occupies residues 1–25; sequence MKKTQTWIITCIYLQLLLFNPLVHS. At glutamine 26 the chain carries Pyrrolidone carboxylic acid. Residues 26 to 215 are Extracellular-facing; it reads QGICRNRVTD…SNSIEDSSLQ (190 aa). 2 cysteine pairs are disulfide-bonded: cysteine 29–cysteine 114 and cysteine 68–cysteine 164. Residues asparagine 90, asparagine 97, asparagine 145, and asparagine 196 are each glycosylated (N-linked (GlcNAc...) asparagine). A helical transmembrane segment spans residues 216-238; the sequence is WAAVALPAFFSLVIGFAFGALYW. The Cytoplasmic portion of the chain corresponds to 239–274; the sequence is KKKQPNLTRTVENRQINEEDNEISMLQEKEREFQEV.

It belongs to the SCF family. As to quaternary structure, homodimer, non-covalently linked. A soluble form is produced by proteolytic processing of the extracellular domain.

The protein localises to the cytoplasm. The protein resides in the cytoskeleton. It is found in the cell membrane. It localises to the cell projection. Its subcellular location is the lamellipodium. The protein localises to the filopodium. The protein resides in the secreted. Functionally, stimulates the proliferation of mast cells. Able to augment the proliferation of both myeloid and lymphoid hematopoietic progenitors in bone marrow culture. Also mediates cell-cell adhesion. Acts synergistically with other cytokines, probably interleukins. The chain is Kit ligand (KITLG) from Capra hircus (Goat).